Reading from the N-terminus, the 269-residue chain is Energy-coupling factor transporter ATP-binding protein EcfA1 (269 aa).

The 235-residue stretch at 8-242 folds into the ABC transporter domain; the sequence is ITFNHVRFKY…GDGLTEIGLD (235 aa). 42–49 lines the ATP pocket; the sequence is GHNGSGKS.

It belongs to the ABC transporter superfamily. Energy-coupling factor EcfA family. As to quaternary structure, forms a stable energy-coupling factor (ECF) transporter complex composed of 2 membrane-embedded substrate-binding proteins (S component), 2 ATP-binding proteins (A component) and 2 transmembrane proteins (T component).

The protein localises to the cell membrane. Functionally, ATP-binding (A) component of a common energy-coupling factor (ECF) ABC-transporter complex. Unlike classic ABC transporters this ECF transporter provides the energy necessary to transport a number of different substrates. The sequence is that of Energy-coupling factor transporter ATP-binding protein EcfA1 from Staphylococcus saprophyticus subsp. saprophyticus (strain ATCC 15305 / DSM 20229 / NCIMB 8711 / NCTC 7292 / S-41).